The following is a 338-amino-acid chain: 3-dehydroquinate synthase (338 aa).

NAD(+) is bound by residues 58–63 (DGERAK), 92–96 (GTTGD), 116–117 (TT), K129, and K138. Zn(2+) contacts are provided by E169, H229, and H245.

It belongs to the sugar phosphate cyclases superfamily. Dehydroquinate synthase family. It depends on NAD(+) as a cofactor. Co(2+) is required as a cofactor. Zn(2+) serves as cofactor.

It localises to the cytoplasm. It carries out the reaction 7-phospho-2-dehydro-3-deoxy-D-arabino-heptonate = 3-dehydroquinate + phosphate. It participates in metabolic intermediate biosynthesis; chorismate biosynthesis; chorismate from D-erythrose 4-phosphate and phosphoenolpyruvate: step 2/7. Its function is as follows. Catalyzes the conversion of 3-deoxy-D-arabino-heptulosonate 7-phosphate (DAHP) to dehydroquinate (DHQ). The protein is 3-dehydroquinate synthase of Picrophilus torridus (strain ATCC 700027 / DSM 9790 / JCM 10055 / NBRC 100828 / KAW 2/3).